The primary structure comprises 305 residues: Acetylglutamate kinase (305 aa).

Substrate is bound by residues 75–76 (GG), Arg97, and Asn202.

This sequence belongs to the acetylglutamate kinase family. ArgB subfamily.

The protein localises to the cytoplasm. The enzyme catalyses N-acetyl-L-glutamate + ATP = N-acetyl-L-glutamyl 5-phosphate + ADP. It participates in amino-acid biosynthesis; L-arginine biosynthesis; N(2)-acetyl-L-ornithine from L-glutamate: step 2/4. Functionally, catalyzes the ATP-dependent phosphorylation of N-acetyl-L-glutamate. This is Acetylglutamate kinase from Rhodospirillum centenum (strain ATCC 51521 / SW).